Consider the following 557-residue polypeptide: Potassium-transporting ATPase potassium-binding subunit (557 aa).

10 helical membrane-spanning segments follow: residues 6 to 26 (IQLL…GLGL), 59 to 79 (ALSL…ILFF), 127 to 147 (AGLT…LLAL), 172 to 192 (LYVL…FGVV), 247 to 267 (ISNF…VFLY), 278 to 298 (WAIF…VWTF), 363 to 383 (IVFG…LLTV), 410 to 430 (ILGI…SVSV), 475 to 495 (VMIA…VLVI), and 520 to 540 (FYIL…FPVL).

Belongs to the KdpA family. The system is composed of three essential subunits: KdpA, KdpB and KdpC.

The protein localises to the cell inner membrane. In terms of biological role, part of the high-affinity ATP-driven potassium transport (or Kdp) system, which catalyzes the hydrolysis of ATP coupled with the electrogenic transport of potassium into the cytoplasm. This subunit binds the periplasmic potassium ions and delivers the ions to the membrane domain of KdpB through an intramembrane tunnel. This chain is Potassium-transporting ATPase potassium-binding subunit, found in Leptospira interrogans serogroup Icterohaemorrhagiae serovar copenhageni (strain Fiocruz L1-130).